Here is a 188-residue protein sequence, read N- to C-terminus: Gag polyprotein (188 aa).

Positions V77–P90 are enriched in basic and acidic residues. The disordered stretch occupies residues V77 to V99. The short motif at P121 to Y124 is the PPXY motif element. The interval Y130–P166 is disordered.

Post-translationally, specific enzymatic cleavages in vivo yield mature proteins.

The protein localises to the virion. This is Gag polyprotein (ev-2) from Galliformes (EV-2).